A 397-amino-acid chain; its full sequence is Tryptophan synthase beta chain (397 aa).

At Lys88 the chain carries N6-(pyridoxal phosphate)lysine.

It belongs to the TrpB family. Tetramer of two alpha and two beta chains. The cofactor is pyridoxal 5'-phosphate.

It catalyses the reaction (1S,2R)-1-C-(indol-3-yl)glycerol 3-phosphate + L-serine = D-glyceraldehyde 3-phosphate + L-tryptophan + H2O. It participates in amino-acid biosynthesis; L-tryptophan biosynthesis; L-tryptophan from chorismate: step 5/5. Functionally, the beta subunit is responsible for the synthesis of L-tryptophan from indole and L-serine. The chain is Tryptophan synthase beta chain from Shewanella amazonensis (strain ATCC BAA-1098 / SB2B).